The primary structure comprises 362 residues: Aminomethyltransferase (362 aa).

The protein belongs to the GcvT family. In terms of assembly, the glycine cleavage system is composed of four proteins: P, T, L and H.

It carries out the reaction N(6)-[(R)-S(8)-aminomethyldihydrolipoyl]-L-lysyl-[protein] + (6S)-5,6,7,8-tetrahydrofolate = N(6)-[(R)-dihydrolipoyl]-L-lysyl-[protein] + (6R)-5,10-methylene-5,6,7,8-tetrahydrofolate + NH4(+). In terms of biological role, the glycine cleavage system catalyzes the degradation of glycine. This Listeria monocytogenes serotype 4a (strain HCC23) protein is Aminomethyltransferase.